A 967-amino-acid polypeptide reads, in one-letter code: Probable disease resistance protein At1g61190 (967 aa).

Positions 20 to 68 (RCLCGKGYIRNLEKNLRALQREMEDLRATQHEVQNKVAREESRHQQRLE) form a coiled coil. The disordered stretch occupies residues 132–153 (GNFDEVSQPPPRSEVEERPTQP). An NB-ARC domain is found at 138 to 441 (SQPPPRSEVE…CEGFIGEDQV (304 aa)). Position 180-187 (180-187 (GMGGVGKT)) interacts with ATP. LRR repeat units lie at residues 516 to 537 (AVRR…SKCS), 538 to 559 (ELTT…FIRY), 562 to 585 (KLVV…SGLV), 586 to 608 (SLQY…KELK), and 609 to 631 (KLIF…SRLL).

Belongs to the disease resistance NB-LRR family.

Functionally, probable disease resistance protein. In Arabidopsis thaliana (Mouse-ear cress), this protein is Probable disease resistance protein At1g61190.